Consider the following 166-residue polypeptide: NAD(P)H-quinone oxidoreductase subunit I, chloroplastic (166 aa).

4Fe-4S ferredoxin-type domains lie at 55-84 and 95-124; these read GRIH…VDWK and LNYS…MTEE. Residues Cys64, Cys67, Cys70, Cys74, Cys104, Cys107, Cys110, and Cys114 each contribute to the [4Fe-4S] cluster site.

It belongs to the complex I 23 kDa subunit family. In terms of assembly, NDH is composed of at least 16 different subunits, 5 of which are encoded in the nucleus. [4Fe-4S] cluster is required as a cofactor.

The protein localises to the plastid. It localises to the chloroplast thylakoid membrane. The enzyme catalyses a plastoquinone + NADH + (n+1) H(+)(in) = a plastoquinol + NAD(+) + n H(+)(out). The catalysed reaction is a plastoquinone + NADPH + (n+1) H(+)(in) = a plastoquinol + NADP(+) + n H(+)(out). In terms of biological role, NDH shuttles electrons from NAD(P)H:plastoquinone, via FMN and iron-sulfur (Fe-S) centers, to quinones in the photosynthetic chain and possibly in a chloroplast respiratory chain. The immediate electron acceptor for the enzyme in this species is believed to be plastoquinone. Couples the redox reaction to proton translocation, and thus conserves the redox energy in a proton gradient. The polypeptide is NAD(P)H-quinone oxidoreductase subunit I, chloroplastic (Parthenium hysterophorus (Santa Maria feverfew)).